The chain runs to 427 residues: MPHADQLITNIGRLVTGPQAPLRGQQLAQLTAIDQAVVAVQAGNIVALGSQAELSAWTADQTIDAGGYLAIPGFVDPHTHACYAGDRAHEFELRIKGASYSELMAAGGGIMSTVHATRAASKAELVAQTRPRLDQLLAHGTTTVEIKSGYGLDTATELTMLEAIAELAQTHPIGIVPTFMGAHAIPAEYRDNPEAFVDLVVDEMLPAVAAWWQQQTIWQEPLACDIFCENGAFSVAQSQRILVKAKALGFRLKLHVDEFEPLGGTPLAVELGAISVDHLVATPPEHIAILANSETVGVSLPGTPFGLGKSQFSPARSLIEANGILALATDCNPGTSPCESMPMAIAIACRYLRLTPAEALNAATVNSAFAIRQHERVGSLAVGMQADLALLNLPDERHIGYKFGTNPVAIVIKTGRVVRRNQLHADR.

Residues histidine 78 and histidine 80 each contribute to the Fe(3+) site. The Zn(2+) site is built by histidine 78 and histidine 80. 4-imidazolone-5-propanoate is bound by residues arginine 87, tyrosine 150, and histidine 183. Tyrosine 150 lines the N-formimidoyl-L-glutamate pocket. Histidine 255 lines the Fe(3+) pocket. Histidine 255 lines the Zn(2+) pocket. Glutamate 258 contributes to the 4-imidazolone-5-propanoate binding site. Aspartate 330 contributes to the Fe(3+) binding site. Zn(2+) is bound at residue aspartate 330. N-formimidoyl-L-glutamate contacts are provided by asparagine 332 and glycine 334. Threonine 335 provides a ligand contact to 4-imidazolone-5-propanoate.

It belongs to the metallo-dependent hydrolases superfamily. HutI family. Requires Zn(2+) as cofactor. Fe(3+) is required as a cofactor.

Its subcellular location is the cytoplasm. It carries out the reaction 4-imidazolone-5-propanoate + H2O = N-formimidoyl-L-glutamate. It participates in amino-acid degradation; L-histidine degradation into L-glutamate; N-formimidoyl-L-glutamate from L-histidine: step 3/3. Catalyzes the hydrolytic cleavage of the carbon-nitrogen bond in imidazolone-5-propanoate to yield N-formimidoyl-L-glutamate. It is the third step in the universal histidine degradation pathway. This chain is Imidazolonepropionase, found in Herpetosiphon aurantiacus (strain ATCC 23779 / DSM 785 / 114-95).